Here is a 360-residue protein sequence, read N- to C-terminus: Glutamate 5-kinase (360 aa).

Residue K7 participates in ATP binding. Positions 47, 134, and 146 each coordinate substrate. Residues 166-167 (TD) and 210-216 (TGGISTK) each bind ATP. Residues 275-356 (VGKITLDDGA…SSIIVVHRDV (82 aa)) form the PUA domain.

The protein belongs to the glutamate 5-kinase family.

It is found in the cytoplasm. The enzyme catalyses L-glutamate + ATP = L-glutamyl 5-phosphate + ADP. The protein operates within amino-acid biosynthesis; L-proline biosynthesis; L-glutamate 5-semialdehyde from L-glutamate: step 1/2. Its function is as follows. Catalyzes the transfer of a phosphate group to glutamate to form L-glutamate 5-phosphate. The protein is Glutamate 5-kinase of Prochlorococcus marinus (strain AS9601).